The chain runs to 461 residues: Carboxypeptidase Rv3627c (461 aa).

Residues 1-28 (MGPTRWRKSTHVVVGAAVLAFVAVVVAA) form the signal peptide. The active-site Acyl-ester intermediate is the Ser-114. The active-site Proton acceptor is Lys-117. The active site involves Ser-295.

Belongs to the peptidase S13 family.

Its function is as follows. Carboxypeptidase that cleaves terminal D-alanine from peptidoglycan in the mycobacterial cell wall. May cleave L-Lys-D-Ala and/or D-Ala-D-Ala peptide bonds. Exerts important effects on mycobacterial cell morphology and cell division. This Mycobacterium tuberculosis (strain ATCC 25618 / H37Rv) protein is Carboxypeptidase Rv3627c.